We begin with the raw amino-acid sequence, 792 residues long: MSVAKSIAAVLVALLPGALAQANTSYVDYNVEANPNLTPQSVATIDLSFPDCENGPLSKTLVCDTSARPHDRAAALVSMFTFEELVNNTGNTSPGVPRLGLPPYQVWSEALHGLDRANFTDEGEYSWATSFPMPILTMSALNRTLINQIATIIATQGRAFNNVGRYGLDVYAPNINAFRSAMWGRGQETPGEDAYCLASAYAYEYITGIQGGVDPEHLKLVATAKHYAGYDLENWDGHSRLGNDMNITQQELSEYYTPQFLVAARDAKVHSVMCSYNAVNGVPSCANSFFLQTLLRDTFGFVEDGYVSSDCDSAYNVWNPHEFAANITGAAADSIRAGTDIDCGTTYQYYFGEAFDEQEVTRAEIERGVIRLYSNLVRLGYFDGNGSVYRDLTWNDVVTTDAWNISYEAAVEGIVLLKNDGTLPLAKSVRSVALIGPWMNVTTQLQGNYFGPAPYLISPLNAFQNSDFDVNYAFGTNISSHSTDGFSEALSAAKKSDVIIFAGGIDNTLEAEAMDRMNITWPGNQLQLIDQLSQLGKPLIVLQMGGGQVDSSSLKSNKNVNSLIWGGYPGQSGGQALLDIITGKRAPAGRLVVTQYPAEYATQFPATDMSLRPHGNNPGQTYMWYTGTPVYEFGHGLFYTTFHASLPGTGKDKTSFNIQDLLTQPHPGFANVEQMPLLNFTVTITNTGKVASDYTAMLFANTTAGPAPYPNKWLVGFDRLASLEPHRSQTMTIPVTIDSVARTDEAGNRVLYPGKYELALNNERSVVLQFVLTGREAVIFKWPVEQQQISSA.

Residues 1 to 20 (MSVAKSIAAVLVALLPGALA) form the signal peptide. N-linked (GlcNAc...) asparagine glycans are attached at residues Asn-23, Asn-87, Asn-118, Asn-142, and Asn-246. Asp-310 is an active-site residue. Residues Asn-326, Asn-385, Asn-404, Asn-440, Asn-477, Asn-518, Asn-679, and Asn-701 are each glycosylated (N-linked (GlcNAc...) asparagine).

It belongs to the glycosyl hydrolase 3 family.

The protein resides in the secreted. It catalyses the reaction Hydrolysis of (1-&gt;4)-beta-D-xylans, to remove successive D-xylose residues from the non-reducing termini.. It functions in the pathway glycan degradation; xylan degradation. In terms of biological role, xylan 1,4-beta-xylosidase involved in the hydrolysis of xylan, a major structural heterogeneous polysaccharide found in plant biomass representing the second most abundant polysaccharide in the biosphere, after cellulose. This chain is Probable exo-1,4-beta-xylosidase xlnD (xlnD), found in Aspergillus fumigatus (strain CBS 144.89 / FGSC A1163 / CEA10) (Neosartorya fumigata).